The chain runs to 1060 residues: Protein transport protein Sec16B (1060 aa).

Residues methionine 1–valine 86 are disordered. The tract at residues arginine 34–leucine 224 is required for endoplasmic reticulum localization. Over residues histidine 41–glutamine 50 the composition is skewed to basic and acidic residues. Polar residues predominate over residues aspartate 51–glutamine 60. Phosphoserine occurs at positions 55, 143, 167, 188, and 191. Disordered stretches follow at residues glutamate 163–tyrosine 236, alanine 245–valine 264, lysine 711–threonine 733, proline 770–arginine 796, and proline 834–cysteine 1060. Polar residues-rich tracts occupy residues glutamine 165–glutamine 195 and asparagine 213–asparagine 222. Positions leucine 223–tyrosine 236 are enriched in low complexity. 2 positions are modified to phosphoserine: serine 254 and serine 258. The tract at residues alanine 271–alanine 713 is central conserved domain (CCD); required for localization to endoplasmic reticulum exit sites. Polar residues predominate over residues asparagine 837 to proline 847. A Phosphothreonine modification is found at threonine 858. Phosphoserine is present on residues serine 868, serine 871, serine 874, serine 882, and serine 883. 2 stretches are compositionally biased toward basic and acidic residues: residues alanine 875–serine 890 and lysine 899–lysine 908. Residues serine 909–phenylalanine 918 are compositionally biased toward low complexity. A compositionally biased stretch (acidic residues) spans glycine 930–glutamate 941. The span at alanine 991–serine 1001 shows a compositional bias: gly residues. Residues asparagine 1031–arginine 1046 are compositionally biased toward polar residues.

This sequence belongs to the SEC16 family. As to quaternary structure, SEC16A and SEC16B are each present in multiple copies in a heteromeric complex. Interacts with TFG. Interacts with SEC13. Ubiquitous.

The protein localises to the endoplasmic reticulum membrane. It is found in the golgi apparatus membrane. Its function is as follows. Plays a role in the organization of the endoplasmic reticulum exit sites (ERES), also known as transitional endoplasmic reticulum (tER). Required for secretory cargo traffic from the endoplasmic reticulum to the Golgi apparatus. Involved in peroxisome biogenesis. Regulates the transport of peroxisomal biogenesis factors PEX3 and PEX16 from the ER to peroxisomes. The chain is Protein transport protein Sec16B (SEC16B) from Homo sapiens (Human).